Here is a 282-residue protein sequence, read N- to C-terminus: MVHQLKLLKDDFFASDQQAVAVADCYPQDVFAEHTHDFCELVIVWRGNGLHVLNDRPYRITRGDLFYIHADDKHSYASVNDLVLQNIIYCPERLKLNLDWQGAIPGFSVSAGQPHWRLGSMGMAQARQIIGQLEHESSQHVPFANEMAELLFGQLVMLLNRHRYTSDSLPPTSSETLLDKLITRLAASLKSPFALDKFCDEASCSERVLRQQFRQQTGMTINQYLRQVRVCHAQYLLQHSRLLISDISTECGFEDSNYFSVVFTRETGMTPSQWRHLNSQKD.

In terms of domain architecture, HTH araC/xylS-type spans Asp-179–Leu-277. DNA-binding regions (H-T-H motif) lie at residues Asp-196–Thr-217 and Ile-244–Thr-267.

Binds DNA as a dimer.

It is found in the cytoplasm. Its function is as follows. Activates expression of the rhaSR operon in response to L-rhamnose. The sequence is that of HTH-type transcriptional activator RhaR from Shigella dysenteriae serotype 1 (strain Sd197).